The sequence spans 204 residues: Peptidyl-tRNA hydrolase 2 (204 aa).

TRNA is bound at residue Tyr37. His42 (proton acceptor) is an active-site residue. TRNA contacts are provided by Phe86, Asn88, and Asn134.

It belongs to the PTH family. Monomer.

The protein resides in the cytoplasm. The enzyme catalyses an N-acyl-L-alpha-aminoacyl-tRNA + H2O = an N-acyl-L-amino acid + a tRNA + H(+). In terms of biological role, hydrolyzes ribosome-free peptidyl-tRNAs (with 1 or more amino acids incorporated), which drop off the ribosome during protein synthesis, or as a result of ribosome stalling. Catalyzes the release of premature peptidyl moieties from peptidyl-tRNA molecules trapped in stalled 50S ribosomal subunits, and thus maintains levels of free tRNAs and 50S ribosomes. This Corynebacterium glutamicum (strain ATCC 13032 / DSM 20300 / JCM 1318 / BCRC 11384 / CCUG 27702 / LMG 3730 / NBRC 12168 / NCIMB 10025 / NRRL B-2784 / 534) protein is Peptidyl-tRNA hydrolase 2.